The chain runs to 405 residues: MSISYFMKKIVILGSTGSIGTSTLSVITHNPDKYQVFALVGGRNVELMFQQCLTFQPSFAALDDDVAAKMLAEKLKAHQSQTTVLAGQQAICELAAHPEADMVMAAIVGAAGLLPTLSAVKAGKRVLLANKEALVTCGQLFIDAVRESQAQLLPVDSEHNAIFQSLPPEAQRQIGFCPLSELGISKIVLTGSGGPFRYTPLEQFEQITPAQAVAHPNWSMGKKISVDSATMMNKGLEYIEARWLFNASAEEMEVIIHPQSIIHSMVRYIDGSVIAQMGNPDMRTPIAETMAYPSRTVAGVEPLDFYQLNGLTFIEPDYQRYPCLKLAIDAFSAGQYATTAMNAANEIAVASFLDNKIKFTDIARLNQLVVSKLQPQKIHCIEDVLEVDKKARELSQSIILSFSHP.

NADPH is bound by residues T16, G17, S18, I19, G42, R43, N44, and N130. Residue K131 participates in 1-deoxy-D-xylulose 5-phosphate binding. E132 lines the NADPH pocket. Residue D156 participates in Mn(2+) binding. Residues S157, E158, S192, and H215 each coordinate 1-deoxy-D-xylulose 5-phosphate. Residue E158 coordinates Mn(2+). G221 is an NADPH binding site. Residues S228, N233, K234, and E237 each contribute to the 1-deoxy-D-xylulose 5-phosphate site. E237 is a binding site for Mn(2+).

The protein belongs to the DXR family. Mg(2+) serves as cofactor. Mn(2+) is required as a cofactor.

It carries out the reaction 2-C-methyl-D-erythritol 4-phosphate + NADP(+) = 1-deoxy-D-xylulose 5-phosphate + NADPH + H(+). It functions in the pathway isoprenoid biosynthesis; isopentenyl diphosphate biosynthesis via DXP pathway; isopentenyl diphosphate from 1-deoxy-D-xylulose 5-phosphate: step 1/6. Its function is as follows. Catalyzes the NADPH-dependent rearrangement and reduction of 1-deoxy-D-xylulose-5-phosphate (DXP) to 2-C-methyl-D-erythritol 4-phosphate (MEP). This is 1-deoxy-D-xylulose 5-phosphate reductoisomerase from Pasteurella multocida (strain Pm70).